Consider the following 416-residue polypeptide: Chromate transport protein (416 aa).

The disordered stretch occupies residues 1–21 (MSVANEESYRPSKATDATTEA). 11 helical membrane passes run 99-119 (LGGVLAGLGFMLPGFLLMFAL), 128-148 (FVGTALGAAFLGVQAAVIALI), 160-177 (LLDRWLWVIAIVCALAAI), 181-198 (DFWITLPAGGLVYALLVL), 204-224 (ALLVTLAAVALAAAVALWAAP), 237-257 (ASVLLIFASGLKAGLLTFGGA), 283-303 (LALSGVLPAPLIIFATFVGYV), 308-328 (IGAVAMTVGVFLPAFAFSLIF), 341-361 (LHAFLDGVAAGVVGLIGATTI), 371-391 (VPSLTVGMSIFAAGLAFLYAW), and 395-415 (LNVVVVILAAGLAGWLVFPNQ).

This sequence belongs to the chromate ion transporter (CHR) (TC 2.A.51) family.

The protein resides in the cell inner membrane. Its function is as follows. This protein reduces chromate accumulation and is essential for chromate resistance. The protein is Chromate transport protein of Pseudomonas aeruginosa.